We begin with the raw amino-acid sequence, 136 residues long: MTERTLVLIKPDGVQRLLVGEIISRIERKGLAIAALELRNVTEELASQHYAEHEGKPFFGSLLEFITSAPVVAAIVEGPRAIAAFRQLAGGTDPVEKATPGTIRGDFGLETQFNLVHGSDSAESAQREIALWFPSA.

ATP-binding residues include Lys10, Phe58, Arg86, Thr92, Arg104, and Asn114. Residue His117 is the Pros-phosphohistidine intermediate of the active site.

The protein belongs to the NDK family. In terms of assembly, homotetramer. It depends on Mg(2+) as a cofactor.

The protein localises to the cytoplasm. The catalysed reaction is a 2'-deoxyribonucleoside 5'-diphosphate + ATP = a 2'-deoxyribonucleoside 5'-triphosphate + ADP. It catalyses the reaction a ribonucleoside 5'-diphosphate + ATP = a ribonucleoside 5'-triphosphate + ADP. Functionally, major role in the synthesis of nucleoside triphosphates other than ATP. The ATP gamma phosphate is transferred to the NDP beta phosphate via a ping-pong mechanism, using a phosphorylated active-site intermediate. This Mycobacterium ulcerans (strain Agy99) protein is Nucleoside diphosphate kinase.